We begin with the raw amino-acid sequence, 131 residues long: Phosphoribosyl-AMP cyclohydrolase (131 aa).

Position 78 (Asp-78) interacts with Mg(2+). Cys-79 lines the Zn(2+) pocket. The Mg(2+) site is built by Asp-80 and Asp-82. Residues Cys-96 and Cys-103 each coordinate Zn(2+).

It belongs to the PRA-CH family. In terms of assembly, homodimer. Mg(2+) serves as cofactor. It depends on Zn(2+) as a cofactor.

The protein resides in the cytoplasm. It catalyses the reaction 1-(5-phospho-beta-D-ribosyl)-5'-AMP + H2O = 1-(5-phospho-beta-D-ribosyl)-5-[(5-phospho-beta-D-ribosylamino)methylideneamino]imidazole-4-carboxamide. It participates in amino-acid biosynthesis; L-histidine biosynthesis; L-histidine from 5-phospho-alpha-D-ribose 1-diphosphate: step 3/9. Catalyzes the hydrolysis of the adenine ring of phosphoribosyl-AMP. This chain is Phosphoribosyl-AMP cyclohydrolase, found in Neisseria meningitidis serogroup C / serotype 2a (strain ATCC 700532 / DSM 15464 / FAM18).